The following is a 64-amino-acid chain: DNA gyrase inhibitor YacG (64 aa).

The Zn(2+) site is built by C9, C12, C28, and C32. Positions 42–64 are disordered; sequence DEENAIPGAPDMSDSDGWSEEQY. Acidic residues predominate over residues 54–64; that stretch reads SDSDGWSEEQY.

Belongs to the DNA gyrase inhibitor YacG family. As to quaternary structure, interacts with GyrB. Requires Zn(2+) as cofactor.

Inhibits all the catalytic activities of DNA gyrase by preventing its interaction with DNA. Acts by binding directly to the C-terminal domain of GyrB, which probably disrupts DNA binding by the gyrase. In Vibrio vulnificus (strain YJ016), this protein is DNA gyrase inhibitor YacG.